Reading from the N-terminus, the 694-residue chain is Cyclic nucleotide-gated ion channel 4 (694 aa).

The segment covering 1-15 (MATEQEFTRASRFSR) has biased composition (basic and acidic residues). The interval 1 to 64 (MATEQEFTRA…RIGLTCGGRR (64 aa)) is disordered. Residues 1–92 (MATEQEFTRA…RSKWVREWNK (92 aa)) lie on the Cytoplasmic side of the membrane. Over residues 24 to 53 (SEEDNTEEEDEEEEEMEEIEEEEEEEEEED) the composition is skewed to acidic residues. The chain crosses the membrane as a helical span at residues 93 to 113 (VFLLVCATGLFVDPLFLYTLS). The Extracellular segment spans residues 114–126 (VSDTCMCLLVDGW). Residues 127–147 (LALTVTALRSMTDLLHLWNIW) traverse the membrane as a helical segment. Over 148–187 (IQFKIARRWPYPGGDSDGDTNKGGGTRGSTRVAPPYVKKN) the chain is Cytoplasmic. A helical membrane pass occupies residues 188–208 (GFFFDLFVILPLPQVVLWVVI). Residues 209 to 216 (PSLLKRGS) are Extracellular-facing. Residues 217 to 237 (VTLVVSVLLVTFLFQYLPKIY) traverse the membrane as a helical segment. Residues 238-251 (HSIRHLRRNATLSG) lie on the Cytoplasmic side of the membrane. The helical transmembrane segment at 252 to 272 (YIFGTVWWGIALNMIAYFVAA) threads the bilayer. At 273–392 (HAAGACWYLL…LESTTEWSEV (120 aa)) the chain is on the extracellular side. Residues 393 to 413 (VFNIIVLTSGLLLVTMLIGNI) form a helical membrane-spanning segment. Topologically, residues 414–694 (KVFLHATTSK…KPNPDDFDDY (281 aa)) are cytoplasmic. A nucleoside 3',5'-cyclic phosphate-binding positions include 496–626 (LFQH…ARYY) and Asp-565. The segment at 610–626 (FRYTFVNEKVKRSARYY) is calmodulin-binding. An IQ domain is found at 631–660 (RTWAAVAVQLAWRRYKHRLTLTSLSFIRPR).

This sequence belongs to the cyclic nucleotide-gated cation channel (TC 1.A.1.5) family. Homotetramer or heterotetramer.

The protein resides in the cell membrane. Functionally, acts as a cyclic nucleotide-gated ion channel. Permeable to potassium and sodium in a cyclic nucleotide-dependent fashion (cAMP or cGMP). Might constitute a common downstream component of the signaling pathways leading to hypersensitive response (HR). The protein is Cyclic nucleotide-gated ion channel 4 (CNGC4) of Arabidopsis thaliana (Mouse-ear cress).